The sequence spans 273 residues: Undecaprenyl-diphosphatase (273 aa).

8 consecutive transmembrane segments (helical) span residues 3 to 23, 47 to 67, 90 to 110, 120 to 140, 148 to 168, 186 to 206, 217 to 237, and 249 to 269; these read IILW…EFLP, ALDA…WQDI, LLLG…LLKL, IIAT…QWGS, IGIL…LPGA, PTAA…ATLV, LLIP…LAIA, and WVFI…IALG.

Belongs to the UppP family.

It is found in the cell inner membrane. It carries out the reaction di-trans,octa-cis-undecaprenyl diphosphate + H2O = di-trans,octa-cis-undecaprenyl phosphate + phosphate + H(+). In terms of biological role, catalyzes the dephosphorylation of undecaprenyl diphosphate (UPP). Confers resistance to bacitracin. This Thermosynechococcus vestitus (strain NIES-2133 / IAM M-273 / BP-1) protein is Undecaprenyl-diphosphatase.